The primary structure comprises 465 residues: MEKTMDKIVQVAKARGFVYPGSEIYGGLANTWDYGNLGVELKNNVKRAWWKKFIQENPYNVGVDCAILMNPQTWVASGHLGGFSDPLMDCKECHERFRADKIIEDFAQDNGIELETSVDGWTNEQMVDFIKEHNVPCPSCGKHNFTDIRQFNLMFKTFQGVTEDAKNTVYLRPETAQGIFVNFKNVQRTSRKKIPFGIGQVGKSFRNEITPGNFTFRTREFEQMELEFFCEPGTDLEWFKYWRGFCRDWLISLGIKEDEMRLRDHDPAELAFYSKGTTDIEFLFPFGWGELWGIADRTDYDLGRHQEVSGQDLTYFDDQKNEKYLPYVIEPSLGADRVVLAFLCAAYDEEDIGTPEKPDVRTVFHFHPALAPVKIGVLPLSKKLNESAEKVFAQLSKTYNCEYDDRGTIGKRYRRQDEIGTPFCVTYDFDSEEDHCVTVRDRDTMEQERIAIDELDAYFAKKFEF.

Substrate-binding residues include Arg-98 and Glu-174. Residues 206 to 208 (RNE), 216 to 221 (FRTREF), 290 to 291 (EL), and 334 to 337 (GADR) contribute to the ATP site. Residue 221–225 (FEQME) participates in substrate binding. Position 330-334 (330-334 (EPSLG)) interacts with substrate.

The protein belongs to the class-II aminoacyl-tRNA synthetase family. In terms of assembly, homodimer.

The protein localises to the cytoplasm. The enzyme catalyses tRNA(Gly) + glycine + ATP = glycyl-tRNA(Gly) + AMP + diphosphate. In terms of biological role, catalyzes the attachment of glycine to tRNA(Gly). The polypeptide is Glycine--tRNA ligase (Agathobacter rectalis (strain ATCC 33656 / DSM 3377 / JCM 17463 / KCTC 5835 / VPI 0990) (Eubacterium rectale)).